The sequence spans 130 residues: Protein ApaG (130 aa).

In terms of domain architecture, ApaG spans 3 to 127; sequence RAVTRHIEVT…FSLDSPDGKR (125 aa).

The polypeptide is Protein ApaG (Bradyrhizobium sp. (strain ORS 278)).